The chain runs to 185 residues: Ribosome-recycling factor (185 aa).

It belongs to the RRF family.

Its subcellular location is the cytoplasm. Responsible for the release of ribosomes from messenger RNA at the termination of protein biosynthesis. May increase the efficiency of translation by recycling ribosomes from one round of translation to another. The polypeptide is Ribosome-recycling factor (Shewanella sp. (strain MR-4)).